The following is a 470-amino-acid chain: Myricetin 3-O-rhamnoside 1,2-glucosyltransferase UGT709G2 (470 aa).

H20 (proton acceptor) is an active-site residue. H20 is an an anthocyanidin binding site. Residue D117 is the Charge relay of the active site. Residues A340, Q342, H357, W360, N361, S362, and E365 each contribute to the UDP-alpha-D-glucose site. A380 serves as a coordination point for an anthocyanidin. UDP-alpha-D-glucose is bound by residues D381 and Q382.

Belongs to the UDP-glycosyltransferase family. In terms of tissue distribution, expressed in young cromes.

It catalyses the reaction myricetin 3-O-alpha-L-rhamnoside + UDP-alpha-D-glucose = myricetin 3-O-[beta-D-glucosyl-(1-&gt;2)-alpha-L-rhamnoside] + UDP + H(+). Its pathway is flavonoid metabolism. Functionally, glucosyltransferase involved in montbretin A (MbA) biosynthesis. Catalyzes the glucosylation of myricetin 3-O-alpha-L-rhamnoside (MR) to produce myricetin 3-O-[beta-D-glucosyl-(1-&gt;2)-alpha-L-rhamnoside] (MRG), a precursor of MbA. MbA is a potent inhibitor of human pancreatic alpha-amylase and is being developed as drug candidate to treat type-2 diabetes. In vitro, is able to transfer UDP-xylose with 50-fold less efficiency compared with UDP-glucose. In vitro, can use myricetin 3-O-glucoside and quercetin 3-O-glucoside as substrates, although these two flavonoids may not be physiological substrates in vivo. This chain is Myricetin 3-O-rhamnoside 1,2-glucosyltransferase UGT709G2, found in Crocosmia x crocosmiiflora (Montbretia).